A 466-amino-acid chain; its full sequence is MSLPSRLPAILQAVMQGQPQALADSHYPQWHLAPVNGLLNDPNGFCQVAGRYHLFYQWNPLACDHTYKCWGHWSSADLLHWRHEPIALMPDEEYDRNGCYSGSAVEFEGALTLCYTGNVKFPDGGRTAWQCLATENADGTFRKLGPVLPLPEGYTGHVRDPKVWRQDGRWYMVLGAQDVQQRGKVLLFTASDLREWRLVGEIAGHDVNGLANAGYMWECPDLFPLADTHLLICCPQGLAREAQRFLNTYPAVWMAGRFDAERGIFDHGPLHELDSGFEFYAPQTMQADDGRRLLVGWMGVPDGDEMHQPTRAQGWIHQMTCVRELEWQAGTLYQRPLRELVALRGEAQGWCGQTLPLAPMELAFDLSPDSTLGLDFAGALQLTVNRDGLRLSRRGLQTAEMHHRYWRGEARRLRIFIDRSSVEIFINDGEGVMSSRFFPGYPGQLIFSGATPVAFCRWLLRPCMVE.

Substrate-binding positions include 38 to 41 (LLND), Q57, 100 to 101 (YS), 159 to 160 (RD), and E218. The active site involves D41.

It localises to the cytoplasm. The catalysed reaction is Hydrolysis of terminal non-reducing beta-D-fructofuranoside residues in beta-D-fructofuranosides.. Its pathway is glycan biosynthesis; sucrose metabolism. Hydrolyzes sucrose and sucrose-6P, but fails to hydrolyze any of the phosphorylated isomers of sucrose and other phospho-D-glucosides, including maltose-6'P and trehalose-6P. The sequence is that of Sucrose-6-phosphate hydrolase (scrB) from Klebsiella pneumoniae.